A 375-amino-acid chain; its full sequence is Erythronate-4-phosphate dehydrogenase (375 aa).

Positions 45 and 67 each coordinate substrate. Position 147 (Asp-147) interacts with NAD(+). Arg-209 is a catalytic residue. Asp-233 provides a ligand contact to NAD(+). Glu-238 is an active-site residue. Catalysis depends on His-255, which acts as the Proton donor. Position 258 (Gly-258) interacts with NAD(+). Tyr-259 contacts substrate.

This sequence belongs to the D-isomer specific 2-hydroxyacid dehydrogenase family. PdxB subfamily. In terms of assembly, homodimer.

It is found in the cytoplasm. The enzyme catalyses 4-phospho-D-erythronate + NAD(+) = (R)-3-hydroxy-2-oxo-4-phosphooxybutanoate + NADH + H(+). Its pathway is cofactor biosynthesis; pyridoxine 5'-phosphate biosynthesis; pyridoxine 5'-phosphate from D-erythrose 4-phosphate: step 2/5. Its function is as follows. Catalyzes the oxidation of erythronate-4-phosphate to 3-hydroxy-2-oxo-4-phosphonooxybutanoate. The sequence is that of Erythronate-4-phosphate dehydrogenase from Shewanella amazonensis (strain ATCC BAA-1098 / SB2B).